A 795-amino-acid polypeptide reads, in one-letter code: Multiple C2 domain and transmembrane region protein 12 (795 aa).

3 consecutive C2 domains span residues 24 to 142 (RNPR…PQWY), 180 to 298 (VCAS…SAPA), and 341 to 463 (YSSD…TCSY). 3 residues coordinate Ca(2+): asparagine 57, aspartate 109, and asparagine 113. 4 helical membrane-spanning segments follow: residues 590-610 (CTPK…EYYI), 612-632 (WLVT…VILL), 730-750 (FVLI…CLGW), and 752-772 (LHVR…LPWF).

It belongs to the MCTP family. Requires Ca(2+) as cofactor. In terms of tissue distribution, expressed in root vascular tissues and meristems. Observed in flowers.

It localises to the endoplasmic reticulum membrane. Functionally, may function as a signaling molecule by regulating the trafficking of other regulators. This Arabidopsis thaliana (Mouse-ear cress) protein is Multiple C2 domain and transmembrane region protein 12.